A 311-amino-acid chain; its full sequence is tRNA-cytidine(32) 2-sulfurtransferase (311 aa).

The PP-loop motif motif lies at 47-52 (SGGKDS). [4Fe-4S] cluster contacts are provided by Cys-122, Cys-125, and Cys-213.

The protein belongs to the TtcA family. Homodimer. The cofactor is Mg(2+). [4Fe-4S] cluster is required as a cofactor.

Its subcellular location is the cytoplasm. The enzyme catalyses cytidine(32) in tRNA + S-sulfanyl-L-cysteinyl-[cysteine desulfurase] + AH2 + ATP = 2-thiocytidine(32) in tRNA + L-cysteinyl-[cysteine desulfurase] + A + AMP + diphosphate + H(+). It participates in tRNA modification. In terms of biological role, catalyzes the ATP-dependent 2-thiolation of cytidine in position 32 of tRNA, to form 2-thiocytidine (s(2)C32). The sulfur atoms are provided by the cysteine/cysteine desulfurase (IscS) system. The sequence is that of tRNA-cytidine(32) 2-sulfurtransferase from Escherichia coli (strain 55989 / EAEC).